The primary structure comprises 338 residues: Aspartate-semialdehyde dehydrogenase (338 aa).

Residues 13–16 (TGNV) and 41–42 (NS) contribute to the NADP(+) site. Residue Arg-101 coordinates phosphate. Residue Cys-132 is the Acyl-thioester intermediate of the active site. Gln-159 contributes to the substrate binding site. NADP(+)-binding positions include 162-163 (SG) and Pro-187. Position 216 (Lys-216) interacts with phosphate. Residue Arg-237 participates in substrate binding. The active-site Proton acceptor is the His-244. Asn-317 contacts NADP(+).

The protein belongs to the aspartate-semialdehyde dehydrogenase family. In terms of assembly, homodimer.

The catalysed reaction is L-aspartate 4-semialdehyde + phosphate + NADP(+) = 4-phospho-L-aspartate + NADPH + H(+). The protein operates within amino-acid biosynthesis; L-lysine biosynthesis via DAP pathway; (S)-tetrahydrodipicolinate from L-aspartate: step 2/4. It functions in the pathway amino-acid biosynthesis; L-methionine biosynthesis via de novo pathway; L-homoserine from L-aspartate: step 2/3. It participates in amino-acid biosynthesis; L-threonine biosynthesis; L-threonine from L-aspartate: step 2/5. Functionally, catalyzes the NADPH-dependent formation of L-aspartate-semialdehyde (L-ASA) by the reductive dephosphorylation of L-aspartyl-4-phosphate. This Rickettsia typhi (strain ATCC VR-144 / Wilmington) protein is Aspartate-semialdehyde dehydrogenase.